Reading from the N-terminus, the 603-residue chain is Probable lysosomal cobalamin transporter (603 aa).

The next 9 membrane-spanning stretches (helical) occupy residues 13–33 (IWVA…ITVF), 50–70 (IVSL…IALV), 99–119 (IVYY…IPFA), 150–170 (IAFI…PTAA), 201–221 (LLMT…LALL), 318–338 (LFGG…MLIT), 353–373 (GYIL…VKAA), 381–401 (ILMA…IASV), and 422–442 (ALLI…YAVV). An N-linked (GlcNAc...) asparagine glycan is attached at Asn-509. A helical transmembrane segment spans residues 512-532 (VFGAIDFWAQFAFLTVFLLVF). Asn-543 carries N-linked (GlcNAc...) asparagine glycosylation. Residues 578-603 (AKRTVGGHPNGQGYGTSGTNGTASSR) are disordered. A compositionally biased stretch (gly residues) spans 585 to 595 (HPNGQGYGTSG). A glycan (N-linked (GlcNAc...) asparagine) is linked at Asn-597.

It belongs to the LIMR family. LMBRD1 subfamily.

The protein resides in the lysosome membrane. In terms of biological role, probable lysosomal cobalamin transporter. Required to export cobalamin from lysosomes allowing its conversion to cofactors. In Neurospora crassa (strain ATCC 24698 / 74-OR23-1A / CBS 708.71 / DSM 1257 / FGSC 987), this protein is Probable lysosomal cobalamin transporter.